We begin with the raw amino-acid sequence, 451 residues long: MEKQYLTVTALTRYIKTKIEYDPHLQSVWLKGEISNFKYHSRGHMYFTLKDENARIAAVMFAGHNRNIKFRPEDGMKVLVKGKISVYEASGSYQIYVHDMQPDGVGNLHLAYEQLKVRLEEEGLFSRVYKQPIPAYAKTIGVITSPTGAAIRDIITTIKRRYPIGNVIVFPVLVQGEFAAPSIVQAIQTANEMNDIDVLIVGRGGGSIEELWAFNEEIVARAIFASKIPIISAVGHETDFTIADFVADLRAPTPTAAAELAVPNILEMQEKVLQRTLRLQRAMREIVHKRQERLQTLQKSYAFRYPRQIYEQKEEQLDRALEQLVLAKERYMEKKVNQLKQLSFYLEKHHPAQRISQTKIAIETLQKQLRREMQTVLQTKEFAFVRIAKQLEALSPLKVMMRGYGLVYSEKNQVLKSVKDVSAGDVVSVQLQDGILDCNVSSVKERESNGK.

Belongs to the XseA family. As to quaternary structure, heterooligomer composed of large and small subunits.

The protein localises to the cytoplasm. It catalyses the reaction Exonucleolytic cleavage in either 5'- to 3'- or 3'- to 5'-direction to yield nucleoside 5'-phosphates.. Bidirectionally degrades single-stranded DNA into large acid-insoluble oligonucleotides, which are then degraded further into small acid-soluble oligonucleotides. In Bacillus cytotoxicus (strain DSM 22905 / CIP 110041 / 391-98 / NVH 391-98), this protein is Exodeoxyribonuclease 7 large subunit.